The chain runs to 148 residues: uncharacterized protein (148 aa).

This is an uncharacterized protein from Bacillus subtilis (Bacteriophage SP01).